The sequence spans 564 residues: Aspyridones efflux protein (564 aa).

The segment covering 1-17 has biased composition (low complexity); sequence MHPDQADTAAMQQQTTT. A disordered region spans residues 1–49; it reads MHPDQADTAAMQQQTTTECSDRSRPEKAEEGHAREHTVTRTCSREPEQT. A compositionally biased stretch (basic and acidic residues) spans 19 to 47; that stretch reads CSDRSRPEKAEEGHAREHTVTRTCSREPE. 10 helical membrane passes run 66–86, 127–147, 158–178, 185–205, 216–236, 260–280, 287–307, 335–355, 368–388, and 392–412; these read AICL…TAIP, WTFL…ATAP, IAGC…THSV, LFMA…PPLG, WCFW…VFLF, VGTL…QWGG, SGIV…FGIV, FALG…FQGV, LPML…VTII, and APFM…LLLF. The N-linked (GlcNAc...) asparagine glycan is linked to Asn-415. 2 helical membrane-spanning segments follow: residues 416–436 and 454–474; these read VTAA…GFGW and IATA…VSVA. A glycan (N-linked (GlcNAc...) asparagine) is linked at Asn-524. Residues 528-548 form a helical membrane-spanning segment; that stretch reads LSAFFVATIMAIMSLVGCTFV.

The protein belongs to the major facilitator superfamily. TCR/Tet family.

It is found in the cell membrane. Its function is as follows. Efflux pump that may be involved in the secretion of leporins. This is Aspyridones efflux protein (TP) from Neocamarosporium betae (Beet black rot fungus).